A 256-amino-acid chain; its full sequence is Small ribosomal subunit protein eS1 (256 aa).

Position 2 is an N-acetylalanine; partial (alanine 2).

Belongs to the eukaryotic ribosomal protein eS1 family. Component of the small ribosomal subunit. Mature ribosomes consist of a small (40S) and a large (60S) subunit. The 40S subunit contains about 33 different proteins and 1 molecule of RNA (18S). The 60S subunit contains about 49 different proteins and 3 molecules of RNA (25S, 5.8S and 5S).

Its subcellular location is the cytoplasm. This chain is Small ribosomal subunit protein eS1, found in Candida albicans (strain SC5314 / ATCC MYA-2876) (Yeast).